We begin with the raw amino-acid sequence, 236 residues long: Phosphoribosylaminoimidazole-succinocarboxamide synthase (236 aa).

This sequence belongs to the SAICAR synthetase family.

It carries out the reaction 5-amino-1-(5-phospho-D-ribosyl)imidazole-4-carboxylate + L-aspartate + ATP = (2S)-2-[5-amino-1-(5-phospho-beta-D-ribosyl)imidazole-4-carboxamido]succinate + ADP + phosphate + 2 H(+). Its pathway is purine metabolism; IMP biosynthesis via de novo pathway; 5-amino-1-(5-phospho-D-ribosyl)imidazole-4-carboxamide from 5-amino-1-(5-phospho-D-ribosyl)imidazole-4-carboxylate: step 1/2. The sequence is that of Phosphoribosylaminoimidazole-succinocarboxamide synthase from Wolinella succinogenes (strain ATCC 29543 / DSM 1740 / CCUG 13145 / JCM 31913 / LMG 7466 / NCTC 11488 / FDC 602W) (Vibrio succinogenes).